The sequence spans 506 residues: NAD(P)H-quinone oxidoreductase subunit 2 (506 aa).

Helical transmembrane passes span 14-34 (AIIP…VDLA), 42-62 (WAPI…ALQW), 79-99 (LAIA…LISW), 108-128 (PIGE…LLCG), 132-152 (LISI…LSGY), 167-187 (LLVG…LYGL), 206-226 (FITS…IAAV), 240-260 (PTPV…AFAI), 276-296 (LLFT…ALAQ), 302-322 (MLAY…VSGT), 330-350 (VLYL…VILF), 374-394 (LGLS…GFFG), and 409-429 (LLVI…ISVI).

It belongs to the complex I subunit 2 family. In terms of assembly, NDH-1 can be composed of about 15 different subunits; different subcomplexes with different compositions have been identified which probably have different functions.

It is found in the cellular thylakoid membrane. The catalysed reaction is a plastoquinone + NADH + (n+1) H(+)(in) = a plastoquinol + NAD(+) + n H(+)(out). It carries out the reaction a plastoquinone + NADPH + (n+1) H(+)(in) = a plastoquinol + NADP(+) + n H(+)(out). NDH-1 shuttles electrons from an unknown electron donor, via FMN and iron-sulfur (Fe-S) centers, to quinones in the respiratory and/or the photosynthetic chain. The immediate electron acceptor for the enzyme in this species is believed to be plastoquinone. Couples the redox reaction to proton translocation, and thus conserves the redox energy in a proton gradient. Cyanobacterial NDH-1 also plays a role in inorganic carbon-concentration. In Prochlorococcus marinus (strain MIT 9312), this protein is NAD(P)H-quinone oxidoreductase subunit 2.